A 121-amino-acid chain; its full sequence is Acid shock protein (121 aa).

The first 21 residues, 1–21 (MKKVLALMVAATLGLSSVAFA), serve as a signal peptide directing secretion. Positions 22–63 (ADTTATATPAATSTTATVAAQTKATQHQKHKVTKKTTEQKAQ) are excised as a propeptide. The segment at 40–121 (AAQTKATQHQ…AKKPVAAPAA (82 aa)) is disordered. The span at 74 to 83 (VQKAPVQKAQ) shows a compositional bias: low complexity. A compositionally biased stretch (basic residues) spans 84–93 (AAKKHVKKAS). The segment covering 94-103 (VQKAPVQKAQ) has biased composition (low complexity). A compositionally biased stretch (basic residues) spans 104–113 (AAKKHHKTAK).

It belongs to the Asr family. Post-translationally, proteolytic processing gives rise to the active protein.

The protein localises to the periplasm. Its function is as follows. Required for growth and/or survival at acidic conditions. In Yersinia pseudotuberculosis serotype O:1b (strain IP 31758), this protein is Acid shock protein.